The sequence spans 91 residues: DNA-directed RNA polymerase subunit omega (91 aa).

The protein belongs to the RNA polymerase subunit omega family. As to quaternary structure, the RNAP catalytic core consists of 2 alpha, 1 beta, 1 beta' and 1 omega subunit. When a sigma factor is associated with the core the holoenzyme is formed, which can initiate transcription.

The catalysed reaction is RNA(n) + a ribonucleoside 5'-triphosphate = RNA(n+1) + diphosphate. Functionally, promotes RNA polymerase assembly. Latches the N- and C-terminal regions of the beta' subunit thereby facilitating its interaction with the beta and alpha subunits. This Syntrophus aciditrophicus (strain SB) protein is DNA-directed RNA polymerase subunit omega.